We begin with the raw amino-acid sequence, 440 residues long: Ribosomal protein uS12 methylthiotransferase RimO (440 aa).

The region spanning 8 to 118 (PTVGFVSLGC…VMGIVHTHLP (111 aa)) is the MTTase N-terminal domain. 6 residues coordinate [4Fe-4S] cluster: cysteine 17, cysteine 53, cysteine 82, cysteine 149, cysteine 153, and cysteine 156. Positions 135 to 372 (LTPDHFAYLK…MQVQEDISAD (238 aa)) constitute a Radical SAM core domain. Residues 375 to 440 (AAKIDTVIQV…DHHDLYAQVV (66 aa)) form the TRAM domain.

This sequence belongs to the methylthiotransferase family. RimO subfamily. It depends on [4Fe-4S] cluster as a cofactor.

It is found in the cytoplasm. The catalysed reaction is L-aspartate(89)-[ribosomal protein uS12]-hydrogen + (sulfur carrier)-SH + AH2 + 2 S-adenosyl-L-methionine = 3-methylsulfanyl-L-aspartate(89)-[ribosomal protein uS12]-hydrogen + (sulfur carrier)-H + 5'-deoxyadenosine + L-methionine + A + S-adenosyl-L-homocysteine + 2 H(+). Catalyzes the methylthiolation of an aspartic acid residue of ribosomal protein uS12. The polypeptide is Ribosomal protein uS12 methylthiotransferase RimO (Dechloromonas aromatica (strain RCB)).